Consider the following 448-residue polypeptide: JmjC domain-containing protein D (448 aa).

A JmjC domain is found at 305–448 (EQIPQLRNDI…SLSQSFSIFP (144 aa)).

In Dictyostelium discoideum (Social amoeba), this protein is JmjC domain-containing protein D (jcdD).